The primary structure comprises 314 residues: Protein phosphatase PTC7 homolog fig (314 aa).

The 267-residue stretch at 43 to 309 (PYLVTVVQGR…DDITLILSSV (267 aa)) folds into the PPM-type phosphatase domain. Positions 87, 88, and 232 each coordinate Mn(2+).

The protein belongs to the PP2C family. Mg(2+) is required as a cofactor. Requires Mn(2+) as cofactor.

The catalysed reaction is O-phospho-L-seryl-[protein] + H2O = L-seryl-[protein] + phosphate. It carries out the reaction O-phospho-L-threonyl-[protein] + H2O = L-threonyl-[protein] + phosphate. The chain is Protein phosphatase PTC7 homolog fig from Drosophila melanogaster (Fruit fly).